The sequence spans 367 residues: CST complex subunit STN1 (367 aa).

The segment at residues 56–154 (VEILGTVIGR…EIRVTTYYKV (99 aa)) is a DNA-binding region (OB). 2 winged helix-turn-helix (wHTH) regions span residues 190 to 294 (RAFS…YVTR) and 295 to 367 (EDKE…YTAF).

It belongs to the STN1 family. As to quaternary structure, component of the CST complex, composed of TEN1, CTC1 and STN1. Interacts with TEN1 and CTC1; the interaction is direct. Interacts with ACD/TPP1.

It is found in the nucleus. Its subcellular location is the chromosome. The protein resides in the telomere. Functionally, component of the CST complex, a complex that binds to single-stranded DNA and is required to protect telomeres from DNA degradation. The CST complex binds single-stranded DNA with high affinity in a sequence-independent manner, while isolated subunits bind DNA with low affinity by themselves. In addition to telomere protection, the CST complex has probably a more general role in DNA metabolism at non-telomeric sites. The protein is CST complex subunit STN1 of Ailuropoda melanoleuca (Giant panda).